The primary structure comprises 260 residues: 3'-5' ssDNA/RNA exonuclease TatD (260 aa).

Positions 91, 127, and 152 each coordinate a divalent metal cation.

It belongs to the metallo-dependent hydrolases superfamily. TatD-type hydrolase family. TatD subfamily. As to quaternary structure, monomer. Requires Mg(2+) as cofactor.

It is found in the cytoplasm. Functionally, 3'-5' exonuclease that prefers single-stranded DNA and RNA. May play a role in the H(2)O(2)-induced DNA damage repair. The chain is 3'-5' ssDNA/RNA exonuclease TatD from Shigella flexneri serotype 5b (strain 8401).